We begin with the raw amino-acid sequence, 660 residues long: Threonine--tRNA ligase (660 aa).

In terms of domain architecture, TGS spans Met-1–Ser-49. The interval Asp-225–Pro-554 is catalytic. Residues Cys-318, His-369, and His-531 each contribute to the Zn(2+) site.

It belongs to the class-II aminoacyl-tRNA synthetase family. Homodimer. The cofactor is Zn(2+).

The protein resides in the cytoplasm. It carries out the reaction tRNA(Thr) + L-threonine + ATP = L-threonyl-tRNA(Thr) + AMP + diphosphate + H(+). Functionally, catalyzes the attachment of threonine to tRNA(Thr) in a two-step reaction: L-threonine is first activated by ATP to form Thr-AMP and then transferred to the acceptor end of tRNA(Thr). The chain is Threonine--tRNA ligase from Thermoplasma acidophilum (strain ATCC 25905 / DSM 1728 / JCM 9062 / NBRC 15155 / AMRC-C165).